Consider the following 932-residue polypeptide: Ribosome biogenesis protein ERB1 (932 aa).

Residues 1-18 (MVRPSSSSSASASAARSG) are compositionally biased toward low complexity. The tract at residues 1–229 (MVRPSSSSSA…RSQAAQAFDL (229 aa)) is disordered. The span at 27–36 (PTATNPTTRA) shows a compositional bias: polar residues. 2 stretches are compositionally biased toward acidic residues: residues 57-119 (VSDD…EVDS) and 150-172 (DNSDFDDDADEGDLAYDSADEDE). Over residues 175 to 184 (SAFAARSDAS) the composition is skewed to low complexity. WD repeat units lie at residues 555-594 (PDGGRVRCLSVDPTGNWLVTGGDDGRARLWDVAIGRCTAS) and 604-644 (AERS…NYAK). Residues 679-698 (SMPSKPDARSPVAWTRPSEA) are disordered. 4 WD repeats span residues 762–800 (SKGSSIQKLVFHPTKPWIFVATQRYIRIYDLMAQSLIKT), 803–842 (SGFKWISTLDVHPSGDHLMVGSYDKKLAWFDLDLSARPYK), 846–885 (YHARAIRSVHFSTSWNLVADASDDGTLQLFYAKVGADYGE), and 901–932 (KNGLGVLDVKWHPNQPWLFSAGADGNALLWTT).

This sequence belongs to the WD repeat BOP1/ERB1 family. In terms of assembly, component of the NOP7 complex, composed of ERB1, NOP7 and YTM1. The complex is held together by ERB1, which interacts with NOP7 via its N-terminal domain and with YTM1 via a high-affinity interaction between the seven-bladed beta-propeller domains of the 2 proteins. The NOP7 complex associates with the 66S pre-ribosome.

It is found in the nucleus. It localises to the nucleolus. The protein localises to the nucleoplasm. In terms of biological role, component of the NOP7 complex, which is required for maturation of the 25S and 5.8S ribosomal RNAs and formation of the 60S ribosome. This is Ribosome biogenesis protein ERB1 from Mycosarcoma maydis (Corn smut fungus).